Here is a 300-residue protein sequence, read N- to C-terminus: Putative lysophosphatidic acid:oleoyl-CoA acyltransferase (300 aa).

A helical membrane pass occupies residues 32–52; it reads WILIVVVMILRVPLCIISVTL. The HXXXXD motif motif lies at 115 to 120; sequence HSSPLD.

The protein belongs to the 1-acyl-sn-glycerol-3-phosphate acyltransferase family.

It is found in the lipid droplet. The protein resides in the endoplasmic reticulum membrane. It localises to the golgi apparatus membrane. It carries out the reaction a 1-acyl-sn-glycero-3-phosphate + an acyl-CoA = a 1,2-diacyl-sn-glycero-3-phosphate + CoA. Acyl-CoA-dependent lysophosphatidic acid acyltransferase with preference for oleoyl-CoA. Involved in triacylglyceride homeostasis and lipid droplet formation. Involved in vacuolar protein sorting. This is Putative lysophosphatidic acid:oleoyl-CoA acyltransferase (vps66) from Schizosaccharomyces pombe (strain 972 / ATCC 24843) (Fission yeast).